The primary structure comprises 84 residues: Sulfur carrier protein TusA (84 aa).

The active-site Cysteine persulfide intermediate is the cysteine 19.

The protein belongs to the sulfur carrier protein TusA family. Interacts with IscS.

Its subcellular location is the cytoplasm. The protein operates within tRNA modification. Its function is as follows. Sulfur carrier protein involved in sulfur trafficking in the cell. Part of a sulfur-relay system required for 2-thiolation during synthesis of 2-thiouridine of the modified wobble base 5-methylaminomethyl-2-thiouridine (mnm(5)s(2)U) in tRNA. Interacts with IscS and stimulates its cysteine desulfurase activity. Accepts an activated sulfur from IscS, which is then transferred to TusD, and thus determines the direction of sulfur flow from IscS to 2-thiouridine formation. Also appears to be involved in sulfur transfer for the biosynthesis of molybdopterin. This is Sulfur carrier protein TusA from Yersinia enterocolitica serotype O:8 / biotype 1B (strain NCTC 13174 / 8081).